Here is a 91-residue protein sequence, read N- to C-terminus: MIKPLGDRIVLSIDQPEEEKVGGILIANNAKEKPVMGSVVAISETSVGDSKAPKSVKVGDKVMFDKYAGSQVTIDGEDYLIVHEKDILGVL.

The protein belongs to the GroES chaperonin family. Heptamer of 7 subunits arranged in a ring. Interacts with the chaperonin GroEL.

The protein localises to the cytoplasm. Together with the chaperonin GroEL, plays an essential role in assisting protein folding. The GroEL-GroES system forms a nano-cage that allows encapsulation of the non-native substrate proteins and provides a physical environment optimized to promote and accelerate protein folding. GroES binds to the apical surface of the GroEL ring, thereby capping the opening of the GroEL channel. This is Co-chaperonin GroES from Oenococcus oeni (strain ATCC BAA-331 / PSU-1).